Consider the following 532-residue polypeptide: Cilia- and flagella-associated protein 97 (532 aa).

Phosphoserine is present on Ser19. Disordered regions lie at residues 28 to 83 (ETNS…PVEN), 116 to 263 (IPNR…TPDI), 306 to 333 (KAAK…SLDH), 398 to 421 (LSRQ…PPKL), and 485 to 532 (GQYS…TAWL). Basic and acidic residues predominate over residues 35–49 (KQNDDPKERIDKDTK). The segment covering 50–63 (NVNSNTGMQTTENY) has biased composition (polar residues). Over residues 67–82 (KGNERNVKFPPEHPVE) the composition is skewed to basic and acidic residues. Over residues 127-139 (GEDDYYTDGEESS) the composition is skewed to acidic residues. Thr133 carries the phosphothreonine modification. Phosphoserine occurs at positions 138 and 139. Low complexity-rich tracts occupy residues 170 to 185 (SSSS…SGSG) and 194 to 205 (DSHLSDSSPSSK). The residue at position 218 (Ser218) is a Phosphoserine. The span at 227 to 239 (IKSTETQPSSTTP) shows a compositional bias: polar residues. Position 248 is a phosphoserine (Ser248). Over residues 253–263 (TDVSPLSTPDI) the composition is skewed to polar residues. Residues 320-329 (SSKSSSVLDS) are compositionally biased toward low complexity. A Phosphoserine modification is found at Ser330. Positions 374–450 (GKNYSFTREE…ALLKRLEAVK (77 aa)) form a coiled coil. Polar residues predominate over residues 493 to 503 (SRTSSATSGLS).

The protein belongs to the CFAP97 family.

This chain is Cilia- and flagella-associated protein 97, found in Homo sapiens (Human).